The chain runs to 273 residues: Bis(5'-nucleosyl)-tetraphosphatase, symmetrical (273 aa).

The protein belongs to the Ap4A hydrolase family.

The enzyme catalyses P(1),P(4)-bis(5'-adenosyl) tetraphosphate + H2O = 2 ADP + 2 H(+). Its function is as follows. Hydrolyzes diadenosine 5',5'''-P1,P4-tetraphosphate to yield ADP. This is Bis(5'-nucleosyl)-tetraphosphatase, symmetrical from Proteus mirabilis (strain HI4320).